Consider the following 215-residue polypeptide: Probable GTP-binding protein EngB (215 aa).

The EngB-type G domain maps to 30-204; it reads EGLEVAFAGR…QMVLAQWLGL (175 aa). GTP-binding positions include 38-45, 64-68, 82-85, 149-152, and 182-185; these read GRSNAGKS, GRTQL, DLPG, TKAD, and LFSA. Residues Ser-45 and Thr-66 each contribute to the Mg(2+) site.

The protein belongs to the TRAFAC class TrmE-Era-EngA-EngB-Septin-like GTPase superfamily. EngB GTPase family. The cofactor is Mg(2+).

In terms of biological role, necessary for normal cell division and for the maintenance of normal septation. The polypeptide is Probable GTP-binding protein EngB (Pseudomonas paraeruginosa (strain DSM 24068 / PA7) (Pseudomonas aeruginosa (strain PA7))).